The primary structure comprises 451 residues: Phosphoglucosamine mutase (451 aa).

The active-site Phosphoserine intermediate is the S102. Residues S102, D243, D245, and D247 each coordinate Mg(2+). S102 is modified (phosphoserine).

The protein belongs to the phosphohexose mutase family. Requires Mg(2+) as cofactor. In terms of processing, activated by phosphorylation.

The catalysed reaction is alpha-D-glucosamine 1-phosphate = D-glucosamine 6-phosphate. In terms of biological role, catalyzes the conversion of glucosamine-6-phosphate to glucosamine-1-phosphate. This is Phosphoglucosamine mutase from Salinispora tropica (strain ATCC BAA-916 / DSM 44818 / JCM 13857 / NBRC 105044 / CNB-440).